The chain runs to 725 residues: LPS-assembly protein LptD (725 aa).

Positions 1–25 are cleaved as a signal peptide; sequence MSLLSKLHLILYICLLLLPLRFVNA.

The protein belongs to the LptD family. Component of the lipopolysaccharide transport and assembly complex. Interacts with LptE and LptA.

It localises to the cell outer membrane. Its function is as follows. Together with LptE, is involved in the assembly of lipopolysaccharide (LPS) at the surface of the outer membrane. This chain is LPS-assembly protein LptD, found in Nitrosomonas eutropha (strain DSM 101675 / C91 / Nm57).